Reading from the N-terminus, the 506-residue chain is Histidine ammonia-lyase (506 aa).

The segment at residues 143–145 is a cross-link (5-imidazolinone (Ala-Gly)); that stretch reads ASG. The residue at position 144 (Ser-144) is a 2,3-didehydroalanine (Ser).

Belongs to the PAL/histidase family. Post-translationally, contains an active site 4-methylidene-imidazol-5-one (MIO), which is formed autocatalytically by cyclization and dehydration of residues Ala-Ser-Gly.

Its subcellular location is the cytoplasm. The catalysed reaction is L-histidine = trans-urocanate + NH4(+). The protein operates within amino-acid degradation; L-histidine degradation into L-glutamate; N-formimidoyl-L-glutamate from L-histidine: step 1/3. The sequence is that of Histidine ammonia-lyase from Enterobacter sp. (strain 638).